Reading from the N-terminus, the 99-residue chain is Putative GIY-YIG domain-containing protein 242L (99 aa).

The region spanning 5–81 (NGWNIYMVTM…KKQTKKVKLQ (77 aa)) is the GIY-YIG domain.

This is Putative GIY-YIG domain-containing protein 242L from Invertebrate iridescent virus 6 (IIV-6).